A 237-amino-acid chain; its full sequence is Carboxy-S-adenosyl-L-methionine synthase (237 aa).

S-adenosyl-L-methionine contacts are provided by residues Tyr-40, 65–67, 116–117, Asn-131, and Arg-194; these read GCS and DI.

Belongs to the class I-like SAM-binding methyltransferase superfamily. Cx-SAM synthase family. Homodimer.

The enzyme catalyses prephenate + S-adenosyl-L-methionine = carboxy-S-adenosyl-L-methionine + 3-phenylpyruvate + H2O. Catalyzes the conversion of S-adenosyl-L-methionine (SAM) to carboxy-S-adenosyl-L-methionine (Cx-SAM). The sequence is that of Carboxy-S-adenosyl-L-methionine synthase from Dichelobacter nodosus (strain VCS1703A).